Reading from the N-terminus, the 211-residue chain is NADH-quinone oxidoreductase subunit I (211 aa).

The tract at residues Met1–Arg27 is disordered. 4Fe-4S ferredoxin-type domains lie at Leu71–Ala101 and Arg117–Asp146. Residues Cys81, Cys84, Cys87, Cys91, Cys126, Cys129, Cys132, and Cys136 each contribute to the [4Fe-4S] cluster site.

Belongs to the complex I 23 kDa subunit family. In terms of assembly, NDH-1 is composed of 14 different subunits. Subunits NuoA, H, J, K, L, M, N constitute the membrane sector of the complex. [4Fe-4S] cluster serves as cofactor.

Its subcellular location is the cell membrane. It carries out the reaction a quinone + NADH + 5 H(+)(in) = a quinol + NAD(+) + 4 H(+)(out). Its function is as follows. NDH-1 shuttles electrons from NADH, via FMN and iron-sulfur (Fe-S) centers, to quinones in the respiratory chain. The immediate electron acceptor for the enzyme in this species is believed to be menaquinone. Couples the redox reaction to proton translocation (for every two electrons transferred, four hydrogen ions are translocated across the cytoplasmic membrane), and thus conserves the redox energy in a proton gradient. This Mycobacterium bovis (strain ATCC BAA-935 / AF2122/97) protein is NADH-quinone oxidoreductase subunit I.